A 240-amino-acid chain; its full sequence is 5-oxoprolinase subunit B (240 aa).

194–201 (GWQLIGKT) serves as a coordination point for ATP.

It belongs to the PxpB family. As to quaternary structure, forms a complex composed of PxpA, PxpB and PxpC. Interacts with PxpC (KipA). Interaction with PxpC prevents the inhibitory action of PxpB (KipI). Interacts with KinA. Two PxpB monomers bind via their C-domains at a conserved proline in the KinA dimerization and histidine-phosphotransfer (DHp) domain.

It carries out the reaction 5-oxo-L-proline + ATP + 2 H2O = L-glutamate + ADP + phosphate + H(+). Its function is as follows. Catalyzes the cleavage of 5-oxoproline to form L-glutamate coupled to the hydrolysis of ATP to ADP and inorganic phosphate. In addition, is a potent inhibitor of the autophosphorylation reaction of kinase A (kinA) and its reverse reaction, but does not inhibit phosphate transfer to the Spo0F response regulator once kinase A is phosphorylated. Is an inhibitor of the catalytic domain of kinase A affecting the ATP/ADP reactions and not the phosphotransferase functions of this domain. The inhibition is non-competitive with respect to ATP. This Bacillus subtilis (strain 168) protein is 5-oxoprolinase subunit B.